The following is a 693-amino-acid chain: Elongation factor G (693 aa).

The tr-type G domain maps to Glu-9 to Val-283. GTP is bound by residues Ala-18–Thr-25, Asp-82–His-86, and Asn-136–Asp-139.

It belongs to the TRAFAC class translation factor GTPase superfamily. Classic translation factor GTPase family. EF-G/EF-2 subfamily.

Its subcellular location is the cytoplasm. Catalyzes the GTP-dependent ribosomal translocation step during translation elongation. During this step, the ribosome changes from the pre-translocational (PRE) to the post-translocational (POST) state as the newly formed A-site-bound peptidyl-tRNA and P-site-bound deacylated tRNA move to the P and E sites, respectively. Catalyzes the coordinated movement of the two tRNA molecules, the mRNA and conformational changes in the ribosome. The polypeptide is Elongation factor G (Dehalococcoides mccartyi (strain ATCC BAA-2266 / KCTC 15142 / 195) (Dehalococcoides ethenogenes (strain 195))).